We begin with the raw amino-acid sequence, 862 residues long: Leucine--tRNA ligase (862 aa).

Positions 51–61 (PYPSGSLHMGH) match the 'HIGH' region motif. A 'KMSKS' region motif is present at residues 624–628 (KMSKS). Lysine 627 is a binding site for ATP.

It belongs to the class-I aminoacyl-tRNA synthetase family.

The protein resides in the cytoplasm. It carries out the reaction tRNA(Leu) + L-leucine + ATP = L-leucyl-tRNA(Leu) + AMP + diphosphate. The sequence is that of Leucine--tRNA ligase from Prochlorococcus marinus (strain NATL1A).